An 87-amino-acid chain; its full sequence is Small ribosomal subunit protein uS15c (87 aa).

The protein belongs to the universal ribosomal protein uS15 family. As to quaternary structure, part of the 30S ribosomal subunit.

It is found in the plastid. It localises to the chloroplast. The sequence is that of Small ribosomal subunit protein uS15c (rps15) from Solanum bulbocastanum (Wild potato).